Consider the following 462-residue polypeptide: tRNA modification GTPase MnmE (462 aa).

3 residues coordinate (6S)-5-formyl-5,6,7,8-tetrahydrofolate: R23, E86, and K125. The TrmE-type G domain maps to G221–N384. Residue N231 coordinates K(+). Residues N231–T236, S250–T256, and D275–G278 contribute to the GTP site. S235 provides a ligand contact to Mg(2+). Residues S250, I252, and T255 each contribute to the K(+) site. Residue T256 coordinates Mg(2+). A (6S)-5-formyl-5,6,7,8-tetrahydrofolate-binding site is contributed by K462.

Belongs to the TRAFAC class TrmE-Era-EngA-EngB-Septin-like GTPase superfamily. TrmE GTPase family. As to quaternary structure, homodimer. Heterotetramer of two MnmE and two MnmG subunits. K(+) is required as a cofactor.

The protein localises to the cytoplasm. In terms of biological role, exhibits a very high intrinsic GTPase hydrolysis rate. Involved in the addition of a carboxymethylaminomethyl (cmnm) group at the wobble position (U34) of certain tRNAs, forming tRNA-cmnm(5)s(2)U34. This chain is tRNA modification GTPase MnmE, found in Flavobacterium psychrophilum (strain ATCC 49511 / DSM 21280 / CIP 103535 / JIP02/86).